Consider the following 159-residue polypeptide: Phosphoribosylaminoimidazole carboxylase (159 aa).

Substrate-binding residues include S11, D14, S38, K41, G67, and S69.

It catalyses the reaction 5-amino-1-(5-phospho-D-ribosyl)imidazole-4-carboxylate + H(+) = 5-amino-1-(5-phospho-beta-D-ribosyl)imidazole + CO2. It functions in the pathway purine metabolism; IMP biosynthesis via de novo pathway; 5-amino-1-(5-phospho-D-ribosyl)imidazole-4-carboxylate from 5-amino-1-(5-phospho-D-ribosyl)imidazole (carboxylase route): step 1/1. Catalyzes the reversible conversion of 5-aminoimidazole ribonucleotide (AIR) and CO(2) to 4-carboxy-5-aminoimidazole ribonucleotide (CAIR). Does not accept N5-carboxyaminoimidazole ribonucleotide (N5-CAIR) as a substrate. This chain is Phosphoribosylaminoimidazole carboxylase, found in Treponema denticola (strain ATCC 35405 / DSM 14222 / CIP 103919 / JCM 8153 / KCTC 15104).